We begin with the raw amino-acid sequence, 301 residues long: Probable protein phosphatase 2C 4 (301 aa).

Polar residues predominate over residues 1–18; sequence MGPYLSQPNKNKTTTSGE. The segment at 1 to 20 is disordered; it reads MGPYLSQPNKNKTTTSGEGK. A PPM-type phosphatase domain is found at 23–298; that stretch reads IFAASEMQGW…DNMTTLIIYL (276 aa). Residues aspartate 57, glycine 58, aspartate 237, and aspartate 289 each contribute to the Mn(2+) site.

Belongs to the PP2C family. It depends on Mg(2+) as a cofactor. Requires Mn(2+) as cofactor.

It is found in the membrane. It carries out the reaction O-phospho-L-seryl-[protein] + H2O = L-seryl-[protein] + phosphate. The catalysed reaction is O-phospho-L-threonyl-[protein] + H2O = L-threonyl-[protein] + phosphate. In terms of biological role, enzyme with a broad specificity. The chain is Probable protein phosphatase 2C 4 from Paramecium tetraurelia.